The following is a 452-amino-acid chain: MMITLRKLPLAVAVAAGVMSAQAMAVDFHGYARSGIGWTGSGGEQQCFQVTGAQSKYRLGNECETYAELKLGQEVWKEGDKSFYFDTNVAYSVNQQNDWESTDPAFREANVQGKNLIEWLPGSTIWAGKRFYQRHDVHMIDFYYWDISGPGAGIENIDLGFGKLSLAATRSTEAGGSYTFSSQNIYDEVKDTANDVFDVRLAGLQTNPDGVLELGVDYGRANTTDGYKLADGASKDGWMFTAEHTQSMLKGYNKFVVQYATDAMTTQGKGQARGSDGSSSFTEELPDGTKINYANKVINNNGDMWRILDHGAISLGDKWDLMYVGMYQNIDWDNNLGTEWWTVGVRPMYKWTPIMSTLLEVGYDNVKSQQTGDRNNQYKITLAQQWQAGDSIWSRPAIRIFATYAKWDEKWGYIKDGDNISRYAAATNSGISTNSRGDSDEWTFGAQMEIWW.

The signal sequence occupies residues 1–25 (MMITLRKLPLAVAVAAGVMSAQAMA).

It belongs to the porin LamB (TC 1.B.3) family. In terms of assembly, homotrimer formed of three 18-stranded antiparallel beta-barrels, containing three independent channels.

The protein resides in the cell outer membrane. It carries out the reaction beta-maltose(in) = beta-maltose(out). Involved in the transport of maltose and maltodextrins. The polypeptide is Maltoporin (Salmonella newport (strain SL254)).